The following is a 147-amino-acid chain: Riboflavin kinase (147 aa).

CDP is bound at residue 15 to 20 (GLGEGR). Mg(2+)-binding residues include Thr44 and Asn46. Residues Thr97 and Glu104 each coordinate FMN. CDP is bound at residue 109-112 (TELR).

This sequence belongs to the archaeal riboflavin kinase family. Mg(2+) is required as a cofactor.

It catalyses the reaction riboflavin + CTP = CDP + FMN + H(+). Its pathway is cofactor biosynthesis; FMN biosynthesis; FMN from riboflavin (CTP route): step 1/1. In terms of biological role, catalyzes the CTP-dependent phosphorylation of riboflavin (vitamin B2) to form flavin mononucleotide (FMN). This chain is Riboflavin kinase, found in Methanopyrus kandleri (strain AV19 / DSM 6324 / JCM 9639 / NBRC 100938).